The following is a 213-amino-acid chain: Vacuolar protein sorting-associated protein 32 homolog 1 (213 aa).

2 coiled-coil regions span residues 11-42 and 118-176; these read KQET…KKAT and TNID…QLLQ. Positions 180 to 213 are disordered; it reads IHVPQGNKPARAPAQKQPTAEEDELAALQAEMAL.

This sequence belongs to the SNF7 family. Component of the endosomal sorting required for transport complex III (ESCRT-III), composed at least of VPS2, VPS20, VPS24 and VPS32. Interacts with SKD1. Interacts with BRO1/ALIX.

It is found in the endosome. Its function is as follows. Component of the ESCRT-III complex, which is required for multivesicular bodies (MVBs) formation and sorting of endosomal cargo proteins into MVBs. The ESCRT-III complex is probably involved in the concentration of MVB cargo. This chain is Vacuolar protein sorting-associated protein 32 homolog 1 (VPS32.1), found in Arabidopsis thaliana (Mouse-ear cress).